A 665-amino-acid chain; its full sequence is Methionine--tRNA ligase (665 aa).

Positions 16 to 26 (YYPSGKAHIGH) match the 'HIGH' region motif. The 'KMSKS' region signature appears at 311–315 (KMSKS). Position 314 (Lys314) interacts with ATP. The 102-residue stretch at 564-665 (DFDKIDLRVA…SALPNGAKVK (102 aa)) folds into the tRNA-binding domain.

Belongs to the class-I aminoacyl-tRNA synthetase family. MetG type 2B subfamily. As to quaternary structure, homodimer.

The protein resides in the cytoplasm. The catalysed reaction is tRNA(Met) + L-methionine + ATP = L-methionyl-tRNA(Met) + AMP + diphosphate. Its function is as follows. Is required not only for elongation of protein synthesis but also for the initiation of all mRNA translation through initiator tRNA(fMet) aminoacylation. This Listeria monocytogenes serotype 4b (strain F2365) protein is Methionine--tRNA ligase.